The chain runs to 356 residues: Guanine nucleotide-binding protein alpha-15 subunit (356 aa).

Glycine 2 is lipidated: N-myristoyl glycine. A lipid anchor (S-palmitoyl cysteine) is attached at cysteine 5. The region spanning 33-356 (GNQKLLLLGT…GRNLRGTGME (324 aa)) is the G-alpha domain. Residues 36-49 (KLLLLGTGECGKST) form a G1 motif region. GTP contacts are provided by residues 41-48 (GTGECGKS), 177-183 (LRIRIPT), 202-206 (DVGGQ), 271-274 (NKRD), and alanine 328. Serine 48 and threonine 183 together coordinate Mg(2+). The G2 motif stretch occupies residues 175 to 183 (DMLRIRIPT). A G3 motif region spans residues 198–207 (FRIFDVGGQR). Positions 267–274 (ILFLNKRD) are G4 motif. Residues 326 to 331 (TCATDT) form a G5 motif region.

It belongs to the G-alpha family. As to quaternary structure, g proteins are composed of 3 units; alpha, beta and gamma. The alpha chain contains the guanine nucleotide binding site.

Guanine nucleotide-binding proteins (G proteins) are involved as modulators or transducers in various transmembrane signaling systems. This is Guanine nucleotide-binding protein alpha-15 subunit (gpa-15) from Caenorhabditis briggsae.